Reading from the N-terminus, the 576-residue chain is Peptidoglycan D,D-transpeptidase FtsI (576 aa).

A helical transmembrane segment spans residues 22–42; it reads ITILLSLIIITIILVLSRITF. Ser-308 (acyl-ester intermediate) is an active-site residue.

This sequence belongs to the transpeptidase family. FtsI subfamily.

The protein resides in the cell inner membrane. It catalyses the reaction Preferential cleavage: (Ac)2-L-Lys-D-Ala-|-D-Ala. Also transpeptidation of peptidyl-alanyl moieties that are N-acyl substituents of D-alanine.. It functions in the pathway cell wall biogenesis; peptidoglycan biosynthesis. Functionally, catalyzes cross-linking of the peptidoglycan cell wall at the division septum. The polypeptide is Peptidoglycan D,D-transpeptidase FtsI (Buchnera aphidicola subsp. Baizongia pistaciae (strain Bp)).